A 218-amino-acid polypeptide reads, in one-letter code: Uridine kinase (218 aa).

16–23 is a binding site for ATP; sequence GGSGSGKT.

Belongs to the uridine kinase family.

The protein localises to the cytoplasm. It catalyses the reaction uridine + ATP = UMP + ADP + H(+). The catalysed reaction is cytidine + ATP = CMP + ADP + H(+). Its pathway is pyrimidine metabolism; CTP biosynthesis via salvage pathway; CTP from cytidine: step 1/3. It functions in the pathway pyrimidine metabolism; UMP biosynthesis via salvage pathway; UMP from uridine: step 1/1. The polypeptide is Uridine kinase (Limosilactobacillus reuteri (strain DSM 20016) (Lactobacillus reuteri)).